We begin with the raw amino-acid sequence, 470 residues long: ATP synthase subunit beta (470 aa).

157 to 164 (GGAGVGKT) contributes to the ATP binding site.

The protein belongs to the ATPase alpha/beta chains family. F-type ATPases have 2 components, CF(1) - the catalytic core - and CF(0) - the membrane proton channel. CF(1) has five subunits: alpha(3), beta(3), gamma(1), delta(1), epsilon(1). CF(0) has three main subunits: a(1), b(2) and c(9-12). The alpha and beta chains form an alternating ring which encloses part of the gamma chain. CF(1) is attached to CF(0) by a central stalk formed by the gamma and epsilon chains, while a peripheral stalk is formed by the delta and b chains.

Its subcellular location is the cell inner membrane. The catalysed reaction is ATP + H2O + 4 H(+)(in) = ADP + phosphate + 5 H(+)(out). In terms of biological role, produces ATP from ADP in the presence of a proton gradient across the membrane. The catalytic sites are hosted primarily by the beta subunits. This is ATP synthase subunit beta from Geobacter sulfurreducens (strain ATCC 51573 / DSM 12127 / PCA).